The sequence spans 194 residues: Myelin-associated neurite-outgrowth inhibitor (194 aa).

N-acetylmethionine is present on M1. Topologically, residues 1–18 (MNPVYSPGSSGVPYANAK) are cytoplasmic. The residue at position 6 (S6) is a Phosphoserine. A helical membrane pass occupies residues 19–41 (GIGYPAGFPVGYAAAPAYSPNMY). Residues 42-141 (PGANPTFQTG…PAPIPPPRGS (100 aa)) lie on the Extracellular side of the membrane. A glycan (N-linked (GlcNAc...) asparagine) is linked at N45. A helical membrane pass occupies residues 142–163 (GVTMGMVAGTTMAMSAGTLLTA). Over 164 to 194 (HSPTPVAPHPVTVPTYRAPGTPTYSYVPPQW) the chain is Cytoplasmic.

Belongs to the FAM168 family. As to quaternary structure, may form homodimers. May interact with DAZAP2, FAM168A, PRDX6, RBM6, TMTC1 and YPEL2. Interacts with CDC27. Post-translationally, N-glycosylated. Predominantly expressed in the brain, including olfactory bulb, cortex and cerebellum (at protein level).

The protein resides in the cytoplasm. Its subcellular location is the perinuclear region. It localises to the cell membrane. The protein localises to the cell projection. It is found in the axon. Its function is as follows. Inhibitor of neuronal axonal outgrowth. Acts as a negative regulator of CDC42 and STAT3 and a positive regulator of STMN2. Positive regulator of CDC27. This Mus musculus (Mouse) protein is Myelin-associated neurite-outgrowth inhibitor (Fam168b).